A 491-amino-acid chain; its full sequence is Nuatigenin 3-beta-glucosyltransferase (491 aa).

The Proton acceptor role is filled by H20. Residue H20 coordinates an anthocyanidin. The Charge relay role is filled by D125. Positions 352, 354, 369, 372, 373, 374, and 377 each coordinate UDP-alpha-D-glucose. A392 contributes to the an anthocyanidin binding site. The UDP-alpha-D-glucose site is built by E393 and Q394.

The protein belongs to the UDP-glycosyltransferase family. As to expression, expressed in roots, stems and leaves.

The catalysed reaction is nuatigenin + UDP-alpha-D-glucose = nuatigenin 3-beta-D-glucopyranoside + UDP + H(+). The enzyme catalyses diosgenin + UDP-alpha-D-glucose = diosgenin 3-O-beta-D-glucoside + UDP + H(+). It catalyses the reaction tigogenin + UDP-alpha-D-glucose = tigogenin 3-O-beta-D-glucopyranoside + UDP + H(+). It carries out the reaction solasodine + UDP-alpha-D-glucose = solasodine 3-beta-D-glucoside + UDP + H(+). The catalysed reaction is solanidine + UDP-alpha-D-glucose = solanidine 3-O-beta-D-glucopyranoside + UDP + H(+). The enzyme catalyses tomatidine + UDP-alpha-D-glucose = tomatidine 3-O-beta-D-glucopyranoside + UDP + H(+). Functionally, glucosyltransferase involved in steroid saponin biosynthesis. Catalyzes the 3-O-glucosylation of steroidal sapogenins, such as diosgenin, nuatigenin and tigogenin. Can glucosylate steroidal alkaloids, such as solanidine, solasodine and tomatidine. The polypeptide is Nuatigenin 3-beta-glucosyltransferase (Solanum aculeatissimum (Dutch eggplant)).